Reading from the N-terminus, the 409-residue chain is Bone morphogenetic protein 4 (409 aa).

The signal sequence occupies residues 1 to 24 (MIPGNRMLMVVLLCQVLLGGASHA). A propeptide spanning residues 25–293 (SLIPETGKKK…ALTRRRRAKR (269 aa)) is cleaved from the precursor. A Phosphoserine modification is found at S91. N144 and N209 each carry an N-linked (GlcNAc...) asparagine glycan. Positions 284–308 (ALTRRRRAKRSPKHHPQRARKKNKN) are disordered. 3 disulfides stabilise this stretch: C309–C374, C338–C406, and C342–C408. 2 N-linked (GlcNAc...) asparagine glycosylation sites follow: N351 and N366.

Belongs to the TGF-beta family. In terms of assembly, homodimer; disulfide-linked. Interacts with GREM2. Part of a complex consisting of TWSG1 and CHRD. Interacts with the serine proteases, HTRA1 and HTRA3; the interaction with either inhibits BMP4-mediated signaling. The HTRA protease activity is required for this inhibition. Interacts with SOSTDC1. Interacts with FBN1 (via N-terminal domain) and FBN2. Interacts with type I receptor BMPR1A. Interacts with type II receptor BMPR2. Interacts with FSTL1; this interaction inhibits the activation of the BMP4/Smad1/5/8 signaling pathway. Interacts with SCUBE3. Interacts with TGFBR3.

It is found in the secreted. Its subcellular location is the extracellular space. It localises to the extracellular matrix. Functionally, growth factor of the TGF-beta superfamily that plays essential roles in many developmental processes, including neurogenesis, vascular development, angiogenesis and osteogenesis. Acts in concert with PTHLH/PTHRP to stimulate ductal outgrowth during embryonic mammary development and to inhibit hair follicle induction. Initiates the canonical BMP signaling cascade by associating with type I receptor BMPR1A and type II receptor BMPR2. Once all three components are bound together in a complex at the cell surface, BMPR2 phosphorylates and activates BMPR1A. In turn, BMPR1A propagates signal by phosphorylating SMAD1/5/8 that travel to the nucleus and act as activators and repressors of transcription of target genes. Positively regulates the expression of odontogenic development regulator MSX1 via inducing the IPO7-mediated import of SMAD1 to the nucleus. Required for MSX1-mediated mesenchymal molar tooth bud development beyond the bud stage, via promoting Wnt signaling. Acts as a positive regulator of odontoblast differentiation during mesenchymal tooth germ formation, expression is repressed during the bell stage by MSX1-mediated inhibition of CTNNB1 signaling. Able to induce its own expression in dental mesenchymal cells and also in the neighboring dental epithelial cells via an MSX1-mediated pathway. Can also signal through non-canonical BMP pathways such as ERK/MAP kinase, PI3K/Akt, or SRC cascades. For example, induces SRC phosphorylation which, in turn, activates VEGFR2, leading to an angiogenic response. This Bos taurus (Bovine) protein is Bone morphogenetic protein 4.